A 599-amino-acid chain; its full sequence is Protein ECM25 (599 aa).

The region spanning 181 to 359 (NRLTPLAIRQ…NLLDFFPEIA (179 aa)) is the Rho-GAP domain. Disordered regions lie at residues 362–447 (ISSP…PLPI), 468–495 (ASSS…SSTD), and 543–563 (ELQE…KFSQ). 3 stretches are compositionally biased toward low complexity: residues 363–373 (SSPPSSVSSSS), 396–413 (TLPR…TSPT), and 468–483 (ASSS…KTPS). A compositionally biased stretch (basic and acidic residues) spans 543-562 (ELQEKKKKNETTSKTADKFS).

It is found in the cytoplasm. In terms of biological role, may be involved in cell wall organization and biogenesis. The chain is Protein ECM25 (ECM25) from Saccharomyces cerevisiae (strain ATCC 204508 / S288c) (Baker's yeast).